A 115-amino-acid chain; its full sequence is Large ribosomal subunit protein bL19 (115 aa).

Belongs to the bacterial ribosomal protein bL19 family.

This protein is located at the 30S-50S ribosomal subunit interface and may play a role in the structure and function of the aminoacyl-tRNA binding site. This chain is Large ribosomal subunit protein bL19, found in Streptococcus sanguinis (strain SK36).